A 357-amino-acid chain; its full sequence is Probable dual-specificity RNA methyltransferase RlmN (357 aa).

Glu-95 functions as the Proton acceptor in the catalytic mechanism. Positions 106 to 340 constitute a Radical SAM core domain; it reads NRDRHTVCVS…VSVREEKGTD (235 aa). A disulfide bond links Cys-113 and Cys-345. [4Fe-4S] cluster contacts are provided by Cys-120, Cys-124, and Cys-127. S-adenosyl-L-methionine contacts are provided by residues 172 to 173, Ser-204, 227 to 229, and Asn-302; these read GE and SLH. Cys-345 functions as the S-methylcysteine intermediate in the catalytic mechanism.

It belongs to the radical SAM superfamily. RlmN family. Requires [4Fe-4S] cluster as cofactor.

Its subcellular location is the cytoplasm. It carries out the reaction adenosine(2503) in 23S rRNA + 2 reduced [2Fe-2S]-[ferredoxin] + 2 S-adenosyl-L-methionine = 2-methyladenosine(2503) in 23S rRNA + 5'-deoxyadenosine + L-methionine + 2 oxidized [2Fe-2S]-[ferredoxin] + S-adenosyl-L-homocysteine. It catalyses the reaction adenosine(37) in tRNA + 2 reduced [2Fe-2S]-[ferredoxin] + 2 S-adenosyl-L-methionine = 2-methyladenosine(37) in tRNA + 5'-deoxyadenosine + L-methionine + 2 oxidized [2Fe-2S]-[ferredoxin] + S-adenosyl-L-homocysteine. In terms of biological role, specifically methylates position 2 of adenine 2503 in 23S rRNA and position 2 of adenine 37 in tRNAs. The polypeptide is Probable dual-specificity RNA methyltransferase RlmN (Desulfitobacterium hafniense (strain Y51)).